We begin with the raw amino-acid sequence, 344 residues long: tRNA (guanine(26)-N(2))-dimethyltransferase (344 aa).

Residues 1 to 334 (MIVREGSAEI…ASCDLVESLM (334 aa)) enclose the Trm1 methyltransferase domain. Positions 35, 60, and 76 each coordinate S-adenosyl-L-methionine.

The protein belongs to the class I-like SAM-binding methyltransferase superfamily. Trm1 family.

It carries out the reaction guanosine(26) in tRNA + 2 S-adenosyl-L-methionine = N(2)-dimethylguanosine(26) in tRNA + 2 S-adenosyl-L-homocysteine + 2 H(+). In terms of biological role, dimethylates a single guanine residue at position 26 of a number of tRNAs using S-adenosyl-L-methionine as donor of the methyl groups. The chain is tRNA (guanine(26)-N(2))-dimethyltransferase from Thermoplasma acidophilum (strain ATCC 25905 / DSM 1728 / JCM 9062 / NBRC 15155 / AMRC-C165).